The primary structure comprises 664 residues: PAN2-PAN3 deadenylation complex subunit PAN3 (664 aa).

2 disordered regions span residues 1 to 27 and 54 to 134; these read MATTGKSATLEDARHGTGSPKMKGREN and DPHK…PGTM. The segment at 27–56 adopts a C3H1-type zinc-finger fold; sequence NAKDTLCRNVTIYGRCRYEDKGCAFNHDPH. Residues 74-96 show a composition bias toward polar residues; that stretch reads DSPSFTPSILSSNGSSPTSQSAT. A compositionally biased stretch (low complexity) spans 115-131; sequence PRSISSRSNSSTPTTRP. Positions 265–525 are pseudokinase domain; sequence QTLPNTQLPA…NIDIFITGIS (261 aa). ATP-binding positions include R317, 366–373, and 425–426; these read DYHPLSKT and SK. The stretch at 526-564 forms a coiled coil; it reads STLMSTFDSALHLDDQLTSDLSRELENGRLVRLMTKLNF. The knob domain stretch occupies residues 565-664; it reads VNERPEYEHD…LKPSASRRLH (100 aa).

This sequence belongs to the protein kinase superfamily. PAN3 family. As to quaternary structure, homodimer. Forms a heterotrimer with a catalytic subunit pan2 to form the poly(A)-nuclease (PAN) deadenylation complex. Interacts (via PAM-2 motif) with poly(A)-binding protein pab1 (via PABC domain), conferring substrate specificity of the enzyme complex.

The protein resides in the cytoplasm. Functionally, regulatory subunit of the poly(A)-nuclease (PAN) deadenylation complex, one of two cytoplasmic mRNA deadenylases involved in mRNA turnover. PAN specifically shortens poly(A) tails of RNA and the activity is stimulated by poly(A)-binding protein pab1. PAN deadenylation is followed by rapid degradation of the shortened mRNA tails by the CCR4-NOT complex. Deadenylated mRNAs are then degraded by two alternative mechanisms, namely exosome-mediated 3'-5' exonucleolytic degradation, or deadenylation-dependent mRNA decaping and subsequent 5'-3' exonucleolytic degradation by xrn1. May also be involved in post-transcriptional maturation of mRNA poly(A) tails. pan3 acts as a positive regulator for PAN activity, recruiting the catalytic subunit pan2 to mRNA via its interaction with RNA and with pab1. The polypeptide is PAN2-PAN3 deadenylation complex subunit PAN3 (Aspergillus niger (strain ATCC MYA-4892 / CBS 513.88 / FGSC A1513)).